The chain runs to 519 residues: GTPase Der (519 aa).

2 stretches are compositionally biased toward acidic residues: residues methionine 1–glutamate 12 and glycine 30–glycine 54. The disordered stretch occupies residues methionine 1–glycine 54. EngA-type G domains follow at residues cysteine 81–proline 244 and arginine 254–aspartate 427. GTP-binding positions include glycine 87–serine 94, aspartate 134–tryptophan 138, asparagine 196–aspartate 199, glycine 260–serine 267, aspartate 307–leucine 311, and asparagine 372–aspartate 375. In terms of domain architecture, KH-like spans arginine 428 to glutamate 510.

The protein belongs to the TRAFAC class TrmE-Era-EngA-EngB-Septin-like GTPase superfamily. EngA (Der) GTPase family. Associates with the 50S ribosomal subunit.

Functionally, GTPase that plays an essential role in the late steps of ribosome biogenesis. This is GTPase Der from Corynebacterium glutamicum (strain ATCC 13032 / DSM 20300 / JCM 1318 / BCRC 11384 / CCUG 27702 / LMG 3730 / NBRC 12168 / NCIMB 10025 / NRRL B-2784 / 534).